A 373-amino-acid chain; its full sequence is Dual-specificity RNA methyltransferase RlmN (373 aa).

The Proton acceptor role is filled by Glu94. Positions 100–339 (EDDRATLCVS…VIVRKTRGDD (240 aa)) constitute a Radical SAM core domain. Cys107 and Cys344 are disulfide-bonded. 3 residues coordinate [4Fe-4S] cluster: Cys114, Cys118, and Cys121. S-adenosyl-L-methionine contacts are provided by residues 168 to 169 (GE), Ser200, 222 to 224 (SIH), and Asn301. Cys344 functions as the S-methylcysteine intermediate in the catalytic mechanism.

Belongs to the radical SAM superfamily. RlmN family. [4Fe-4S] cluster serves as cofactor.

The protein localises to the cytoplasm. The catalysed reaction is adenosine(2503) in 23S rRNA + 2 reduced [2Fe-2S]-[ferredoxin] + 2 S-adenosyl-L-methionine = 2-methyladenosine(2503) in 23S rRNA + 5'-deoxyadenosine + L-methionine + 2 oxidized [2Fe-2S]-[ferredoxin] + S-adenosyl-L-homocysteine. It carries out the reaction adenosine(37) in tRNA + 2 reduced [2Fe-2S]-[ferredoxin] + 2 S-adenosyl-L-methionine = 2-methyladenosine(37) in tRNA + 5'-deoxyadenosine + L-methionine + 2 oxidized [2Fe-2S]-[ferredoxin] + S-adenosyl-L-homocysteine. In terms of biological role, specifically methylates position 2 of adenine 2503 in 23S rRNA and position 2 of adenine 37 in tRNAs. m2A2503 modification seems to play a crucial role in the proofreading step occurring at the peptidyl transferase center and thus would serve to optimize ribosomal fidelity. This chain is Dual-specificity RNA methyltransferase RlmN, found in Shewanella sp. (strain W3-18-1).